The sequence spans 369 residues: F-box protein UCC1 (369 aa).

Positions 8-45 constitute an F-box domain; sequence LMDLPLEIHLSLLEYVPNELRAVNKYFYVLHNHSYKEK.

Component of the SCF(UCC1) E3 ubiquitin-protein ligase complex composed of CDC53, SKP1, RBX1 and UCC1. Interacts with CIT2. Monoubiquitinated by UBC4.

The protein operates within protein modification; protein ubiquitination. Its function is as follows. Substrate recognition component of the SKP1-CUL1-F-box protein E3 ubiquitin-protein ligase complex SCF(UCC1) which mediates the ubiquitination and subsequent proteasomal degradation of target proteins. The SCF(UCC1) complex acts as a metabolic switch for the glyoxylate cycle and regulates the level of CIT2 protein to maintain citrate homeostasis. The polypeptide is F-box protein UCC1 (UCC1) (Saccharomyces cerevisiae (strain ATCC 204508 / S288c) (Baker's yeast)).